Here is an 86-residue protein sequence, read N- to C-terminus: Large ribosomal subunit protein uL23 (86 aa).

This sequence belongs to the universal ribosomal protein uL23 family. In terms of assembly, part of the 50S ribosomal subunit. Contacts protein L29.

Binds to 23S rRNA. One of the proteins that surrounds the polypeptide exit tunnel on the outside of the ribosome. The chain is Large ribosomal subunit protein uL23 from Aeropyrum pernix (strain ATCC 700893 / DSM 11879 / JCM 9820 / NBRC 100138 / K1).